A 178-amino-acid polypeptide reads, in one-letter code: Large ribosomal subunit protein uL6 (178 aa).

This sequence belongs to the universal ribosomal protein uL6 family. As to quaternary structure, part of the 50S ribosomal subunit.

This protein binds to the 23S rRNA, and is important in its secondary structure. It is located near the subunit interface in the base of the L7/L12 stalk, and near the tRNA binding site of the peptidyltransferase center. This is Large ribosomal subunit protein uL6 from Levilactobacillus brevis (strain ATCC 367 / BCRC 12310 / CIP 105137 / JCM 1170 / LMG 11437 / NCIMB 947 / NCTC 947) (Lactobacillus brevis).